The primary structure comprises 276 residues: Casein kinase II subunit beta-3 (276 aa).

Disordered stretches follow at residues 1–22 (MYKE…LGGA) and 34–86 (KKLE…SEGD).

It belongs to the casein kinase 2 subunit beta family. Heterotetramer of two catalytic alpha subunits and two regulatory beta subunits. Interacts with CCA1. Interacts with LHY. Phosphorylated by alpha subunit.

The protein resides in the cytoplasm. It is found in the cytosol. Its subcellular location is the nucleus. In terms of biological role, plays a complex role in regulating the basal catalytic activity of the alpha subunit. The tetrameric holoenzyme CK2, composed of two alpha and two beta subunits, phosphorylates the transcription factor PIF1 after an exposure to light, resulting in a proteasome-dependent degradation of PIF1 and promotion of photomorphogenesis. CK2 phosphorylates translation initiation factors. May participate in the regulation of the initiation of translation. Stimulates the binding of CCA1 to promoters. This Arabidopsis thaliana (Mouse-ear cress) protein is Casein kinase II subunit beta-3 (CKB3).